We begin with the raw amino-acid sequence, 750 residues long: Polyribonucleotide nucleotidyltransferase (750 aa).

Residues Asp489 and Asp495 each contribute to the Mg(2+) site. Residues 556-620 (PKMITRRIPN…EGIDKVIAKI (65 aa)) enclose the KH domain. An S1 motif domain is found at 630–701 (GSVYEVKVIK…KTRKDKVSRK (72 aa)). A disordered region spans residues 697-750 (KVSRKALMEKPEGYKERAPRDRDDKRGSRDNNRGRDNRGRDNRRDDRKPRENKD). The span at 702–750 (ALMEKPEGYKERAPRDRDDKRGSRDNNRGRDNRGRDNRRDDRKPRENKD) shows a compositional bias: basic and acidic residues.

The protein belongs to the polyribonucleotide nucleotidyltransferase family. Mg(2+) serves as cofactor.

The protein localises to the cytoplasm. It catalyses the reaction RNA(n+1) + phosphate = RNA(n) + a ribonucleoside 5'-diphosphate. Functionally, involved in mRNA degradation. Catalyzes the phosphorolysis of single-stranded polyribonucleotides processively in the 3'- to 5'-direction. In Christiangramia forsetii (strain DSM 17595 / CGMCC 1.15422 / KT0803) (Gramella forsetii), this protein is Polyribonucleotide nucleotidyltransferase.